Here is a 121-residue protein sequence, read N- to C-terminus: uncharacterized protein (121 aa).

This is an uncharacterized protein from Bacillus subtilis (strain 168).